A 775-amino-acid polypeptide reads, in one-letter code: Cation channel sperm-associated protein subunit epsilon-like protein (775 aa).

The first 20 residues, 1-20 (MLARRVVAALLLWLSCCVSA), serve as a signal peptide directing secretion. N-linked (GlcNAc...) asparagine glycosylation is found at asparagine 62 and asparagine 114.

Belongs to the CATSPERD family.

This Mus musculus (Mouse) protein is Cation channel sperm-associated protein subunit epsilon-like protein.